The following is a 309-amino-acid chain: NAD kinase (309 aa).

Aspartate 89 acts as the Proton acceptor in catalysis. NAD(+)-binding positions include 89–90 (DG), 163–164 (NE), histidine 174, arginine 191, aspartate 193, and 204–209 (TAYSLS).

The protein belongs to the NAD kinase family. The cofactor is a divalent metal cation.

It localises to the cytoplasm. The enzyme catalyses NAD(+) + ATP = ADP + NADP(+) + H(+). Its function is as follows. Involved in the regulation of the intracellular balance of NAD and NADP, and is a key enzyme in the biosynthesis of NADP. Catalyzes specifically the phosphorylation on 2'-hydroxyl of the adenosine moiety of NAD to yield NADP. The chain is NAD kinase from Shewanella piezotolerans (strain WP3 / JCM 13877).